We begin with the raw amino-acid sequence, 380 residues long: Large ribosomal subunit protein mL38 (380 aa).

The transit peptide at 1-26 (MAAPWWRAALCECRRWRGFSTSAVLG) directs the protein to the mitochondrion. The stretch at 99–127 (RTQQLLERKQAIQELRANVEEERAARLRT) forms a coiled coil.

Belongs to the phosphatidylethanolamine-binding protein family. Mitochondrion-specific ribosomal protein mL38 subfamily. In terms of assembly, component of the mitochondrial large ribosomal subunit (mt-LSU). Mature mammalian 55S mitochondrial ribosomes consist of a small (28S) and a large (39S) subunit. The 28S small subunit contains a 12S ribosomal RNA (12S mt-rRNA) and 30 different proteins. The 39S large subunit contains a 16S rRNA (16S mt-rRNA), a copy of mitochondrial valine transfer RNA (mt-tRNA(Val)), which plays an integral structural role, and 52 different proteins. mL38 is located at the central protuberance.

It is found in the mitochondrion. In Homo sapiens (Human), this protein is Large ribosomal subunit protein mL38 (MRPL38).